A 322-amino-acid polypeptide reads, in one-letter code: Fructose-1,6-bisphosphatase class 1 3 (322 aa).

Mg(2+) contacts are provided by E84, D103, L105, and D106. Substrate is bound by residues 106 to 109, N198, and K262; that span reads DGSS. Residue E268 participates in Mg(2+) binding.

The protein belongs to the FBPase class 1 family. In terms of assembly, homotetramer. Requires Mg(2+) as cofactor.

Its subcellular location is the cytoplasm. The enzyme catalyses beta-D-fructose 1,6-bisphosphate + H2O = beta-D-fructose 6-phosphate + phosphate. It functions in the pathway carbohydrate biosynthesis; gluconeogenesis. The sequence is that of Fructose-1,6-bisphosphatase class 1 3 from Pseudoalteromonas translucida (strain TAC 125).